Consider the following 498-residue polypeptide: U4/U6 small nuclear ribonucleoprotein Prp31 (498 aa).

Positions 1–24 (MSLADELLADLEEAAEEEEENLID) are disordered. Over residues 7–24 (LLADLEEAAEEEEENLID) the composition is skewed to acidic residues. Coiled coils occupy residues 84–119 (EAAP…KYSK) and 180–214 (DEEL…MSFI). The region spanning 214–332 (IAPNLSIIVG…IERKFDKWQE (119 aa)) is the Nop domain. Residues 333-356 (PPPVKQVKPLPAPLDGQRKKRGGR) are disordered. Positions 350 to 363 (RKKRGGRRYRKMKE) match the Nuclear localization signal (NLS) motif.

It belongs to the PRP31 family. Identified in the spliceosome B complex. Component of the U4/U6-U5 tri-snRNP complex. Component of some MLL1/MLL complex.

It is found in the nucleus. The protein resides in the nucleus speckle. The protein localises to the cajal body. Its function is as follows. Involved in pre-mRNA splicing as component of the spliceosome. Required for the assembly of the U4/U5/U6 tri-snRNP complex, one of the building blocks of the spliceosome. The chain is U4/U6 small nuclear ribonucleoprotein Prp31 (prpf31) from Xenopus laevis (African clawed frog).